The primary structure comprises 350 residues: Putative isomerase YbhH (350 aa).

It belongs to the PrpF family.

In Escherichia coli O6:H1 (strain CFT073 / ATCC 700928 / UPEC), this protein is Putative isomerase YbhH (ybhH).